The following is a 422-amino-acid chain: tRNA(Met) cytidine acetate ligase (422 aa).

ATP is bound by residues 7 to 20 (ITEY…HLYH), Gly102, Asn172, and Arg197.

It belongs to the TmcAL family.

It localises to the cytoplasm. The catalysed reaction is cytidine(34) in elongator tRNA(Met) + acetate + ATP = N(4)-acetylcytidine(34) in elongator tRNA(Met) + AMP + diphosphate. Functionally, catalyzes the formation of N(4)-acetylcytidine (ac(4)C) at the wobble position of elongator tRNA(Met), using acetate and ATP as substrates. First activates an acetate ion to form acetyladenylate (Ac-AMP) and then transfers the acetyl group to tRNA to form ac(4)C34. The sequence is that of tRNA(Met) cytidine acetate ligase from Halothermothrix orenii (strain H 168 / OCM 544 / DSM 9562).